Consider the following 231-residue polypeptide: Orotidine 5'-phosphate decarboxylase (231 aa).

Substrate is bound by residues aspartate 11, lysine 33, 60–69 (DLKLHDIPNT), threonine 119, arginine 181, glutamine 190, glycine 210, and arginine 211. Lysine 62 functions as the Proton donor in the catalytic mechanism.

It belongs to the OMP decarboxylase family. Type 1 subfamily. In terms of assembly, homodimer.

It catalyses the reaction orotidine 5'-phosphate + H(+) = UMP + CO2. It functions in the pathway pyrimidine metabolism; UMP biosynthesis via de novo pathway; UMP from orotate: step 2/2. Functionally, catalyzes the decarboxylation of orotidine 5'-monophosphate (OMP) to uridine 5'-monophosphate (UMP). This is Orotidine 5'-phosphate decarboxylase from Malacoplasma penetrans (strain HF-2) (Mycoplasma penetrans).